Here is a 63-residue protein sequence, read N- to C-terminus: Large ribosomal subunit protein bL32c (63 aa).

Positions 39 to 63 are disordered; it reads SFSSGNEHPKPKGFSGQQTNNKIFE. The span at 53–63 shows a compositional bias: polar residues; it reads SGQQTNNKIFE.

Belongs to the bacterial ribosomal protein bL32 family.

It localises to the plastid. Its subcellular location is the chloroplast. The chain is Large ribosomal subunit protein bL32c from Triticum aestivum (Wheat).